A 207-amino-acid polypeptide reads, in one-letter code: uncharacterized protein (207 aa).

Residues G51 and D72 each contribute to the S-adenosyl-L-methionine site.

It belongs to the methyltransferase superfamily. YrrT family.

In terms of biological role, could be a S-adenosyl-L-methionine-dependent methyltransferase. This is an uncharacterized protein from Staphylococcus carnosus (strain TM300).